The sequence spans 101 residues: Small ribosomal subunit protein uS14 (101 aa).

Belongs to the universal ribosomal protein uS14 family. Part of the 30S ribosomal subunit. Contacts proteins S3 and S10.

Functionally, binds 16S rRNA, required for the assembly of 30S particles and may also be responsible for determining the conformation of the 16S rRNA at the A site. This Burkholderia vietnamiensis (strain G4 / LMG 22486) (Burkholderia cepacia (strain R1808)) protein is Small ribosomal subunit protein uS14.